Reading from the N-terminus, the 826-residue chain is Lon protease (826 aa).

One can recognise a Lon N-terminal domain in the interval 26–221; it reads LPMLPVRDVV…AVNGFVSREV (196 aa). 373 to 380 contributes to the ATP binding site; the sequence is GPPGVGKT. Positions 609 to 790 constitute a Lon proteolytic domain; that stretch reads EPQIGLATGL…NEVLEKALLP (182 aa). Active-site residues include Ser-696 and Lys-739. Residues 788 to 826 form a disordered region; it reads LLPAEKKKAPPKKKPPKKAAKPKAKKTQPKAKTTEAADK. Residues 796–816 are compositionally biased toward basic residues; sequence APPKKKPPKKAAKPKAKKTQP.

It belongs to the peptidase S16 family. Homohexamer. Organized in a ring with a central cavity.

Its subcellular location is the cytoplasm. It catalyses the reaction Hydrolysis of proteins in presence of ATP.. ATP-dependent serine protease that mediates the selective degradation of mutant and abnormal proteins as well as certain short-lived regulatory proteins. Required for cellular homeostasis and for survival from DNA damage and developmental changes induced by stress. Degrades polypeptides processively to yield small peptide fragments that are 5 to 10 amino acids long. Binds to DNA in a double-stranded, site-specific manner. The sequence is that of Lon protease from Desulfatibacillum aliphaticivorans.